The primary structure comprises 631 residues: Leukocyte immunoglobulin-like receptor subfamily B member 3 (631 aa).

Positions 1–23 (MTPALTALLCLGLSLGPRTRVQA) are cleaved as a signal peptide. Over 24–443 (GPFPKPTLWA…STPGLGRYLE (420 aa)) the chain is Extracellular. 4 consecutive Ig-like C2-type domains span residues 42-100 (GSPV…RCHY), 111-229 (DPLE…SLLT), 225-314 (PSLL…DPLN), and 338-419 (GENV…LVVS). A disulfide bridge connects residues cysteine 49 and cysteine 98. Residues 59–70 (RLHKEGSPEPLD) are compositionally biased toward basic and acidic residues. A disordered region spans residues 59 to 78 (RLHKEGSPEPLDRNNPLEPK). N-linked (GlcNAc...) asparagine glycosylation is present at asparagine 139. 2 cysteine pairs are disulfide-bonded: cysteine 144–cysteine 196 and cysteine 245–cysteine 296. 3 N-linked (GlcNAc...) asparagine glycosylation sites follow: asparagine 280, asparagine 301, and asparagine 340. A disulfide bridge links cysteine 345 with cysteine 396. A helical transmembrane segment spans residues 444–464 (VLIGVSVAFVLLLFLLLFLLL). The Cytoplasmic segment spans residues 465-631 (RRQRHSKHRT…PSIYATLAIH (167 aa)). The disordered stretch occupies residues 470–631 (SKHRTSDQRK…PSIYATLAIH (162 aa)). Positions 473–482 (RTSDQRKTDF) are enriched in basic and acidic residues. Residues 512 to 517 (NLYAAV) carry the ITIM motif 1 motif. Basic and acidic residues-rich tracts occupy residues 520 to 537 (TQSE…HDED) and 567 to 581 (LDTK…RQMD). The span at 588–600 (EASQDVTYAQLHS) shows a compositional bias: polar residues. Short sequence motifs (ITIM motif) lie at residues 593 to 598 (VTYAQL) and 623 to 628 (SIYATL). Phosphotyrosine; by LYN is present on residues tyrosine 595 and tyrosine 625.

Interacts with LYN, PTPN6/SHP-1 and PTPN11/SHP-2. In terms of processing, phosphorylated on tyrosine residues by LYN. Phosphorylation at Tyr-595 and Tyr-625 is important for interaction with PTPN6/SHP-1 and PTPN11/SHP-2. Detected in monocytes and B-cells.

It localises to the cell membrane. May act as receptor for class I MHC antigens. Becomes activated upon coligation of LILRB3 and immune receptors, such as FCGR2B and the B-cell receptor. Down-regulates antigen-induced B-cell activation by recruiting phosphatases to its immunoreceptor tyrosine-based inhibitor motifs (ITIM). The protein is Leukocyte immunoglobulin-like receptor subfamily B member 3 (LILRB3) of Homo sapiens (Human).